Consider the following 625-residue polypeptide: BTB/POZ domain-containing protein At5g48130 (625 aa).

In terms of domain architecture, BTB spans 41-105 (ASVHVRVCNK…IYGCPTLIHP (65 aa)). The NPH3 domain occupies 217–469 (DTWIKDLTDL…VQALFIQQLN (253 aa)). Residues 494 to 507 (VPSSRPLTSQQSPC) are compositionally biased toward polar residues. A disordered region spans residues 494 to 513 (VPSSRPLTSQQSPCTDDETG).

The protein belongs to the NPH3 family.

Its pathway is protein modification; protein ubiquitination. May act as a substrate-specific adapter of an E3 ubiquitin-protein ligase complex (CUL3-RBX1-BTB) which mediates the ubiquitination and subsequent proteasomal degradation of target proteins. This Arabidopsis thaliana (Mouse-ear cress) protein is BTB/POZ domain-containing protein At5g48130.